Here is a 124-residue protein sequence, read N- to C-terminus: Acidic phospholipase A2 (124 aa).

Disulfide bonds link Cys-26–Cys-116, Cys-28–Cys-44, Cys-43–Cys-95, Cys-49–Cys-124, Cys-50–Cys-88, Cys-57–Cys-81, and Cys-75–Cys-86. Tyr-27, Gly-29, and Gly-31 together coordinate Ca(2+). His-47 is an active-site residue. Asp-48 contacts Ca(2+). The active site involves Asp-89.

The protein belongs to the phospholipase A2 family. Group II subfamily. D49 sub-subfamily. As to quaternary structure, monomer. The cofactor is Ca(2+). Expressed by the venom gland.

It localises to the secreted. The enzyme catalyses a 1,2-diacyl-sn-glycero-3-phosphocholine + H2O = a 1-acyl-sn-glycero-3-phosphocholine + a fatty acid + H(+). Functionally, snake venom phospholipase A2 (PLA2) that acts in vivo as an anti-thrombotic agent. Inhibits platelet aggregation induced by ADP, arachidonic acid, and thrombin. PLA2 catalyzes the calcium-dependent hydrolysis of the 2-acyl groups in 3-sn-phosphoglycerides. The chain is Acidic phospholipase A2 from Gloydius halys (Chinese water mocassin).